The following is a 227-amino-acid chain: 2-C-methyl-D-erythritol 4-phosphate cytidylyltransferase (227 aa).

The protein belongs to the IspD/TarI cytidylyltransferase family. IspD subfamily.

The enzyme catalyses 2-C-methyl-D-erythritol 4-phosphate + CTP + H(+) = 4-CDP-2-C-methyl-D-erythritol + diphosphate. Its pathway is isoprenoid biosynthesis; isopentenyl diphosphate biosynthesis via DXP pathway; isopentenyl diphosphate from 1-deoxy-D-xylulose 5-phosphate: step 2/6. Functionally, catalyzes the formation of 4-diphosphocytidyl-2-C-methyl-D-erythritol from CTP and 2-C-methyl-D-erythritol 4-phosphate (MEP). The protein is 2-C-methyl-D-erythritol 4-phosphate cytidylyltransferase of Bordetella bronchiseptica (strain ATCC BAA-588 / NCTC 13252 / RB50) (Alcaligenes bronchisepticus).